Consider the following 820-residue polypeptide: Disintegrin and metalloproteinase domain-containing protein 29 (820 aa).

Positions 1-18 (MKMLLLLHCLGVFLSCSG) are cleaved as a signal peptide. The propeptide occupies 19–193 (HIQDEHPQYH…TQKQSSYVGW (175 aa)). The Extracellular segment spans residues 194-674 (WIHFRIVEIV…GPPPKRKKKK (481 aa)). The 193-residue stretch at 198–390 (RIVEIVVVID…RTKCLLETVH (193 aa)) folds into the Peptidase M12B domain. Residues N217 and N320 are each glycosylated (N-linked (GlcNAc...) asparagine). 3 disulfides stabilise this stretch: C307-C384, C347-C369, and C349-C354. N-linked (GlcNAc...) asparagine glycans are attached at residues N368, N428, N469, N538, N545, N558, and N564. A Disintegrin domain is found at 397–483 (VKRCGNGVVE…KCPDDFYVED (87 aa)). Residues C455 and C475 are joined by a disulfide bond. 3 disulfide bridges follow: C625–C636, C630–C642, and C644–C653. In terms of domain architecture, EGF-like spans 625-654 (CSPAFCNKRGICNNKHHCHCNYLWDPPNCL). A helical transmembrane segment spans residues 675–695 (KFCYLCILLLIVLFILLCCLY). Topologically, residues 696–820 (RLCKKSKPIK…SQSQPPVTPS (125 aa)) are cytoplasmic. Residues 706-820 (KQQDVQTPSA…SQSQPPVTPS (115 aa)) are disordered. The span at 715–727 (AKEEEKIQRRPHE) shows a compositional bias: basic and acidic residues. Residues 738–820 (PSQSQPPVTP…SQSQPPVTPS (83 aa)) are compositionally biased toward low complexity. Repeat copies occupy residues 739–747 (SQSQPPVTP), 748–756 (SQSHPQVMP), 757–765 (SQSQPPVTP), 766–774 (SQSQPRVMP), 775–783 (SQSQPPVMP), 784–792 (SQSHPQLTP), 793–801 (SQSQPPVTP), 802–810 (SQRQPQLMP), and 811–819 (SQSQPPVTP). The 9 X 9 AA approximate repeats stretch occupies residues 739–819 (SQSQPPVTPS…PSQSQPPVTP (81 aa)).

In terms of tissue distribution, expressed specifically in testes.

Its subcellular location is the membrane. May be involved in spermatogenesis and fertilization. Seems to be a non catalytic metalloprotease-like protein. This is Disintegrin and metalloproteinase domain-containing protein 29 (ADAM29) from Homo sapiens (Human).